The chain runs to 443 residues: Probable D-serine dehydratase (443 aa).

Residue lysine 118 is modified to N6-(pyridoxal phosphate)lysine.

Belongs to the serine/threonine dehydratase family. DsdA subfamily. Pyridoxal 5'-phosphate serves as cofactor.

It carries out the reaction D-serine = pyruvate + NH4(+). The chain is Probable D-serine dehydratase from Aeromonas hydrophila subsp. hydrophila (strain ATCC 7966 / DSM 30187 / BCRC 13018 / CCUG 14551 / JCM 1027 / KCTC 2358 / NCIMB 9240 / NCTC 8049).